Reading from the N-terminus, the 160-residue chain is Putative control protein C.MjaVP (160 aa).

Functionally, may be involved in control of expression of the type II restriction enzyme MjaV and/or its methyltransferase M.MjaV. In Methanocaldococcus jannaschii (strain ATCC 43067 / DSM 2661 / JAL-1 / JCM 10045 / NBRC 100440) (Methanococcus jannaschii), this protein is Putative control protein C.MjaVP.